The primary structure comprises 545 residues: Calcium-dependent protein kinase 10 (545 aa).

Positions methionine 1–aspartate 36 are disordered. Residue glycine 2 is the site of N-myristoyl glycine attachment. In terms of domain architecture, Protein kinase spans tyrosine 63 to isoleucine 321. ATP is bound by residues leucine 69 to threonine 77 and lysine 92. The active-site Proton acceptor is aspartate 187. Residue serine 227 is modified to Phosphoserine. Positions alanine 327–isoleucine 357 are autoinhibitory domain. EF-hand domains follow at residues glutamine 364–glutamine 399, leucine 400–isoleucine 435, glutamate 436–glutamate 471, and proline 472–tryptophan 507. The Ca(2+) site is built by aspartate 377, aspartate 379, aspartate 381, lysine 383, glutamate 388, aspartate 413, aspartate 415, asparagine 417, glutamate 424, aspartate 449, aspartate 451, serine 453, tyrosine 455, glutamate 460, aspartate 485, aspartate 487, aspartate 489, arginine 491, and glutamate 496.

This sequence belongs to the protein kinase superfamily. Ser/Thr protein kinase family. CDPK subfamily.

Its subcellular location is the membrane. It catalyses the reaction L-seryl-[protein] + ATP = O-phospho-L-seryl-[protein] + ADP + H(+). The enzyme catalyses L-threonyl-[protein] + ATP = O-phospho-L-threonyl-[protein] + ADP + H(+). Activated by calcium. Autophosphorylation may play an important role in the regulation of the kinase activity. In terms of biological role, may play a role in signal transduction pathways that involve calcium as a second messenger. May be a positive regulator controlling stress signal transduction. The protein is Calcium-dependent protein kinase 10 (CPK10) of Arabidopsis thaliana (Mouse-ear cress).